A 197-amino-acid chain; its full sequence is Ras-like protein rasB (197 aa).

G13–S20 is a GTP binding site. Positions Y35–Y43 match the Effector region motif. GTP is bound by residues D60–Q64 and N119–D122. C194 is modified (cysteine methyl ester). Residue C194 is the site of S-geranylgeranyl cysteine attachment. A propeptide spans L195–L197 (removed in mature form).

The protein belongs to the small GTPase superfamily. Ras family.

It localises to the cell membrane. It carries out the reaction GTP + H2O = GDP + phosphate + H(+). With respect to regulation, alternates between an inactive form bound to GDP and an active form bound to GTP. Activated by a guanine nucleotide-exchange factor (GEF) and inactivated by a GTPase-activating protein (GAP). Its function is as follows. Ras proteins bind GDP/GTP and possess intrinsic GTPase activity. The sequence is that of Ras-like protein rasB (rasB) from Dictyostelium discoideum (Social amoeba).